Reading from the N-terminus, the 360-residue chain is UDP-N-acetylglucosamine--N-acetylmuramyl-(pentapeptide) pyrophosphoryl-undecaprenol N-acetylglucosamine transferase (360 aa).

UDP-N-acetyl-alpha-D-glucosamine is bound by residues 16 to 18 (TGG), Asn128, Arg165, Ser191, Ile247, 266 to 271 (ALTVSE), and Gln292.

The protein belongs to the glycosyltransferase 28 family. MurG subfamily.

The protein resides in the cell inner membrane. The enzyme catalyses di-trans,octa-cis-undecaprenyl diphospho-N-acetyl-alpha-D-muramoyl-L-alanyl-D-glutamyl-meso-2,6-diaminopimeloyl-D-alanyl-D-alanine + UDP-N-acetyl-alpha-D-glucosamine = di-trans,octa-cis-undecaprenyl diphospho-[N-acetyl-alpha-D-glucosaminyl-(1-&gt;4)]-N-acetyl-alpha-D-muramoyl-L-alanyl-D-glutamyl-meso-2,6-diaminopimeloyl-D-alanyl-D-alanine + UDP + H(+). Its pathway is cell wall biogenesis; peptidoglycan biosynthesis. Cell wall formation. Catalyzes the transfer of a GlcNAc subunit on undecaprenyl-pyrophosphoryl-MurNAc-pentapeptide (lipid intermediate I) to form undecaprenyl-pyrophosphoryl-MurNAc-(pentapeptide)GlcNAc (lipid intermediate II). The chain is UDP-N-acetylglucosamine--N-acetylmuramyl-(pentapeptide) pyrophosphoryl-undecaprenol N-acetylglucosamine transferase from Shewanella amazonensis (strain ATCC BAA-1098 / SB2B).